The following is a 464-amino-acid chain: Cerebellar degeneration-related protein 2-like (464 aa).

3 coiled-coil regions span residues 31 to 154 (AAEL…RRKT), 201 to 264 (VSSL…KSRV), and 342 to 379 (MSIL…AEVQ). The disordered stretch occupies residues 371 to 419 (ESLRHAEVQTSRPVSRDPSMKECRVAEPQQPPPTPPQTPSTPEALEGIS). A compositionally biased stretch (basic and acidic residues) spans 384-395 (VSRDPSMKECRV). Over residues 399 to 409 (QQPPPTPPQTP) the composition is skewed to pro residues.

It belongs to the CDR2 family.

This Danio rerio (Zebrafish) protein is Cerebellar degeneration-related protein 2-like (cdr2l).